A 582-amino-acid chain; its full sequence is DNA mismatch repair protein MutL (582 aa).

Belongs to the DNA mismatch repair MutL/HexB family.

Functionally, this protein is involved in the repair of mismatches in DNA. It is required for dam-dependent methyl-directed DNA mismatch repair. May act as a 'molecular matchmaker', a protein that promotes the formation of a stable complex between two or more DNA-binding proteins in an ATP-dependent manner without itself being part of a final effector complex. The polypeptide is DNA mismatch repair protein MutL (Acidiphilium cryptum (strain JF-5)).